A 73-amino-acid polypeptide reads, in one-letter code: Large ribosomal subunit protein bL31 (73 aa).

It belongs to the bacterial ribosomal protein bL31 family. Type A subfamily. Part of the 50S ribosomal subunit.

Its function is as follows. Binds the 23S rRNA. This chain is Large ribosomal subunit protein bL31, found in Dinoroseobacter shibae (strain DSM 16493 / NCIMB 14021 / DFL 12).